Reading from the N-terminus, the 66-residue chain is FMRFamide-like neuropeptides 24 (66 aa).

Residues 1–22 (MSRTSIILVLAIFVAIAAIAQC) form the signal peptide. Positions 23-48 (RNIQYDVDEISPEAAFRYAQWGEIPH) are excised as a propeptide. Phenylalanine amide is present on Phe-61. Positions 65–66 (SV) are excised as a propeptide.

This sequence belongs to the FARP (FMRFamide related peptide) family.

It is found in the secreted. Functionally, FMRFamides and FMRFamide-like peptides are neuropeptides. The sequence is that of FMRFamide-like neuropeptides 24 from Caenorhabditis briggsae.